Consider the following 187-residue polypeptide: Shikimate kinase (187 aa).

Residue 19-24 (GSGKST) participates in ATP binding. Serine 23 lines the Mg(2+) pocket. Residues aspartate 41, arginine 65, and glycine 87 each coordinate substrate. Residue arginine 124 coordinates ATP. Arginine 143 is a binding site for substrate. Arginine 160 is a binding site for ATP.

Belongs to the shikimate kinase family. As to quaternary structure, monomer. It depends on Mg(2+) as a cofactor.

The protein localises to the cytoplasm. The enzyme catalyses shikimate + ATP = 3-phosphoshikimate + ADP + H(+). The protein operates within metabolic intermediate biosynthesis; chorismate biosynthesis; chorismate from D-erythrose 4-phosphate and phosphoenolpyruvate: step 5/7. Its function is as follows. Catalyzes the specific phosphorylation of the 3-hydroxyl group of shikimic acid using ATP as a cosubstrate. The polypeptide is Shikimate kinase (Rippkaea orientalis (strain PCC 8801 / RF-1) (Cyanothece sp. (strain PCC 8801))).